The following is a 438-amino-acid chain: Minor capsid protein p49 (438 aa).

The segment at 134–167 (PQVSGLKDTQKNCLTQPSSLPSLKNPKNSSVPST) is disordered. Polar residues predominate over residues 144 to 167 (KNCLTQPSSLPSLKNPKNSSVPST).

It belongs to the asfivirus p49 structural protein family.

Its subcellular location is the virion. Functionally, together with the penton and the other minor capsid proteins (M1249L, p17), forms a complicated network immediately below the outer capsid shell, stabilizing the whole capsid. Plays an essential role in the formation of infectious virus particles. Especially required for the formation of the capsid vertices. During virion assembly, associates with the membrane and probably mediates the docking of the penton complex to the inner membrane, where it recruits the capsomers to form the penton core. In Ornithodoros (relapsing fever ticks), this protein is Minor capsid protein p49.